The sequence spans 179 residues: Putative DUP240 protein DFP1 (179 aa).

The next 2 helical transmembrane spans lie at 4 to 24 (FLLFVLTILATLTNIWFSGVL) and 26 to 46 (PAMVIRICLGGSMVVLQIWSF).

Belongs to the DUP/COS family.

Its subcellular location is the membrane. The protein is Putative DUP240 protein DFP1 of Saccharomyces cerevisiae (strain ATCC 204508 / S288c) (Baker's yeast).